The primary structure comprises 221 residues: Lipoprotein-releasing system ATP-binding protein LolD (221 aa).

Positions 6-220 (LILKNISKHY…YKLKHRLLNI (215 aa)) constitute an ABC transporter domain. Residue 42 to 49 (GSSGSGKS) coordinates ATP.

Belongs to the ABC transporter superfamily. Lipoprotein translocase (TC 3.A.1.125) family. As to quaternary structure, the complex is composed of two ATP-binding proteins (LolD) and two transmembrane proteins (LolC and LolE).

It is found in the cell inner membrane. In terms of biological role, part of the ABC transporter complex LolCDE involved in the translocation of mature outer membrane-directed lipoproteins, from the inner membrane to the periplasmic chaperone, LolA. Responsible for the formation of the LolA-lipoprotein complex in an ATP-dependent manner. In Rickettsia conorii (strain ATCC VR-613 / Malish 7), this protein is Lipoprotein-releasing system ATP-binding protein LolD.